The sequence spans 139 residues: Small capsomere-interacting protein (139 aa).

Residues 100-120 are compositionally biased toward low complexity; sequence SLTTPSLSSTPTSLTSMPGLS. Positions 100 to 139 are disordered; it reads SLTTPSLSSTPTSLTSMPGLSISGPSTTDTIDSKKKPKAK.

This sequence belongs to the herpesviridae small capsomere-interacting protein family. Interacts with the major capsid protein/MCP.

The protein localises to the virion. The protein resides in the host nucleus. In terms of biological role, participates in the assembly of the infectious particles by decorating the outer surface of the capsid shell and thus forming a layer between the capsid and the tegument. Complexes composed of the major capsid protein and small capsomere-interacting protein/SCP assemble together in the host cytoplasm and are translocated to the nucleus, where they accumulate and participate in capsid assembly. In Saimiri sciureus (Common squirrel monkey), this protein is Small capsomere-interacting protein.